Consider the following 385-residue polypeptide: O-phospho-L-seryl-tRNA:Cys-tRNA synthase (385 aa).

Residues 89–90 (AR), asparagine 195, and 218–220 (SGH) contribute to the pyridoxal 5'-phosphate site. Lysine 221 is subject to N6-(pyridoxal phosphate)lysine.

Belongs to the SepCysS family. As to quaternary structure, homodimer. Interacts with SepRS. Pyridoxal 5'-phosphate serves as cofactor.

The catalysed reaction is O-phospho-L-seryl-tRNA(Cys) + hydrogen sulfide + H(+) = L-cysteinyl-tRNA(Cys) + phosphate. Converts O-phospho-L-seryl-tRNA(Cys) (Sep-tRNA(Cys)) to L-cysteinyl-tRNA(Cys) (Cys-tRNA(Cys)). The polypeptide is O-phospho-L-seryl-tRNA:Cys-tRNA synthase (Methanococcus aeolicus (strain ATCC BAA-1280 / DSM 17508 / OCM 812 / Nankai-3)).